The sequence spans 135 residues: Germinal center-associated signaling and motility-like protein (135 aa).

The tract at residues 1-68 (MGNYLLRKLS…ENGSGSEEVC (68 aa)) is disordered. Residues 22-48 (GNPDEERKRQEMTTFERKLQDQDKKSQ) show a composition bias toward basic and acidic residues. Residues 26–50 (EERKRQEMTTFERKLQDQDKKSQEV) are a coiled coil. A compositionally biased stretch (low complexity) spans 51–66 (SSTSNQENENGSGSEE).

The polypeptide is Germinal center-associated signaling and motility-like protein (GCSAML) (Homo sapiens (Human)).